Consider the following 329-residue polypeptide: Adenylate isopentenyltransferase 7, mitochondrial (329 aa).

A mitochondrion-targeting transit peptide spans 1-40 (MKFSISSLKQVQPILCFKNKLSKVNVNSFLHPKEKVIFVM). 41–48 (GATGSGKS) contacts ATP.

It belongs to the IPP transferase family. In terms of tissue distribution, expressed in both the vascular stele and the phloem companion cells of the root, in endodermis of the root elongation zone, trichomes on young leaves, and some pollen tubes.

Its subcellular location is the mitochondrion. The catalysed reaction is dimethylallyl diphosphate + ADP = N(6)-(dimethylallyl)adenosine 5'-diphosphate + diphosphate. It catalyses the reaction dimethylallyl diphosphate + ATP = N(6)-(dimethylallyl)adenosine 5'-triphosphate + diphosphate. Involved in cytokinin biosynthesis. Catalyzes the transfer of an isopentenyl group from dimethylallyl diphosphate (DMAPP) to ATP and ADP. The chain is Adenylate isopentenyltransferase 7, mitochondrial (IPT7) from Arabidopsis thaliana (Mouse-ear cress).